We begin with the raw amino-acid sequence, 213 residues long: MSDFRQDFIRFAVEEQVLRFGEFVTKAGRPSPYFFNAGLFNHGASLLSLARFYARSISESGIAFDMLFGPAYKGIVLAGATAMMLAEQGRDVPFAFNRKEAKDHGEGGTLIGAPLKGRVLIIDDVISAGTSVRESVEIIRANGAEPAGVAIALDRMERGQGELSATQEVAQKFGLPVVAIASLDDLLGFLAGSPDLADNLTRVEAYRTQYGVR.

5-phospho-alpha-D-ribose 1-diphosphate is bound at residue lysine 26. 34 to 35 lines the orotate pocket; the sequence is FF. Residues 72–73, arginine 98, lysine 99, lysine 102, histidine 104, and 123–131 contribute to the 5-phospho-alpha-D-ribose 1-diphosphate site; these read YK and DDVISAGTS. Residues serine 127 and arginine 155 each coordinate orotate.

The protein belongs to the purine/pyrimidine phosphoribosyltransferase family. PyrE subfamily. As to quaternary structure, homodimer. Mg(2+) serves as cofactor.

The catalysed reaction is orotidine 5'-phosphate + diphosphate = orotate + 5-phospho-alpha-D-ribose 1-diphosphate. The protein operates within pyrimidine metabolism; UMP biosynthesis via de novo pathway; UMP from orotate: step 1/2. Its function is as follows. Catalyzes the transfer of a ribosyl phosphate group from 5-phosphoribose 1-diphosphate to orotate, leading to the formation of orotidine monophosphate (OMP). The polypeptide is Orotate phosphoribosyltransferase (Laribacter hongkongensis (strain HLHK9)).